The chain runs to 447 residues: DNA primase DnaG (447 aa).

The Toprim domain maps to 200–274 (DSIIVVEGRA…DIDYVARAPE (75 aa)). Residues glutamate 206, aspartate 248, and aspartate 250 each contribute to the Mg(2+) site.

It belongs to the archaeal DnaG primase family. Forms a ternary complex with MCM helicase and DNA. Component of the archaeal exosome complex. Mg(2+) serves as cofactor.

The catalysed reaction is ssDNA + n NTP = ssDNA/pppN(pN)n-1 hybrid + (n-1) diphosphate.. In terms of biological role, RNA polymerase that catalyzes the synthesis of short RNA molecules used as primers for DNA polymerase during DNA replication. Also part of the exosome, which is a complex involved in RNA degradation. Acts as a poly(A)-binding protein that enhances the interaction between heteromeric, adenine-rich transcripts and the exosome. This is DNA primase DnaG from Pyrococcus abyssi (strain GE5 / Orsay).